The sequence spans 306 residues: D-alanine--D-alanine ligase (306 aa).

The ATP-grasp domain occupies 101–303; the sequence is KQVWQGIGLT…FSQLVVKILE (203 aa). 134–189 contacts ATP; that stretch reads VADLGLPLIVKPSLEGSSVGMTKVNEISELRGALEAAFRYDVDLLVEKWLHGPEYT. The Mg(2+) site is built by Asp-257, Glu-270, and Asn-272.

This sequence belongs to the D-alanine--D-alanine ligase family. The cofactor is Mg(2+). Mn(2+) serves as cofactor.

The protein localises to the cytoplasm. The catalysed reaction is 2 D-alanine + ATP = D-alanyl-D-alanine + ADP + phosphate + H(+). The protein operates within cell wall biogenesis; peptidoglycan biosynthesis. Its function is as follows. Cell wall formation. This is D-alanine--D-alanine ligase from Photorhabdus laumondii subsp. laumondii (strain DSM 15139 / CIP 105565 / TT01) (Photorhabdus luminescens subsp. laumondii).